Consider the following 311-residue polypeptide: MTILIDRHSDQNDAGDEIVEKNQGNGKEEETELVLDAGFEAPHTNSFGRTFRDYDAESERRRGVEEFYRVNHIGQTVDFVRKMREEYEKLNRTEMSIWECCELLNEFIDESDPDLDEPQIEHLLQTAEAIRKDYPDEDWLHLTGLIHDLGKVLLHSSFGELPQWAVVGDTFPVGCAFDESIVHHKYFKENPDYDNPSYNSKYGIYTEGCGLDNVLMSWGHDDYMYLVAKENQTTLPSAGLFIIRYHSFYALHKSEAYKHLMNNEDRENMKWLKVFNKYDLYSKSKVRVNVEEVKPYYLSLTNKYFPSKLKW.

The segment covering 1-11 (MTILIDRHSDQ) has biased composition (basic and acidic residues). Residues 1-29 (MTILIDRHSDQNDAGDEIVEKNQGNGKEE) form a disordered region. Substrate is bound by residues arginine 52 and 109 to 111 (DES). Residues histidine 122, histidine 147, and aspartate 148 each contribute to the Fe cation site. Substrate contacts are provided by residues lysine 151 and 168 to 169 (GD). Fe cation is bound by residues histidine 220, histidine 246, and aspartate 279. 246-247 (HS) is a binding site for substrate.

It belongs to the myo-inositol oxygenase family. Fe cation serves as cofactor. As to expression, expressed in roots, young leaves, stems, flowers and siliques.

The protein resides in the cytoplasm. It catalyses the reaction myo-inositol + O2 = D-glucuronate + H2O + H(+). Its pathway is polyol metabolism; myo-inositol degradation into D-glucuronate; D-glucuronate from myo-inositol: step 1/1. Functionally, catalyzes the oxygenative cleavage of myo-inositol to D-glucuronate. Involved in the biosynthesis of UDP-glucuronic acid (UDP-GlcA), providing nucleotide sugars for cell-wall polymers. May be also involved in plant ascorbate biosynthesis. In Arabidopsis thaliana (Mouse-ear cress), this protein is Inositol oxygenase 1 (MIOX1).